A 92-amino-acid polypeptide reads, in one-letter code: Neuropeptide ShK-like2 (92 aa).

Residues 1–23 (MTTIRCVLFAVLLFAYCALLIKA) form the signal peptide. Positions 24-51 (RSIDAEAEKTWQEEETKTVAEKSPLKKR) are excised as a propeptide. Intrachain disulfides connect Cys53-Cys92, Cys61-Cys85, and Cys70-Cys89.

Transcripts are first expressed mostly in the endoderm (with rare ectodermal cells) in the late planulae. They are mostly expressed in endodermal ganglion cells in the body column and tentacles in primary polyps, as well as in a small number of ectodermal sensory neurons in tentacles and body wall. They are not expressed in nematocytes. As to expression, transcripts are predominantly expressed in ectodermal sensory neurons in early and late planulae. They are expressed in endodermal ganglion cells in the body column and tentacles in primary polyps, as well as in a small number of ectodermal neurons in pharynx. They are not expressed in nematocytes.

Functionally, in vivo, this neuropeptide induces contraction paralysis followed by death (within 2 hours) on 4 zebrafish larvae on the 15 tested. Also induces body contraction in Nematostella 11-dpf polyps. The protein is Neuropeptide ShK-like2 of Nematostella vectensis (Starlet sea anemone).